A 394-amino-acid chain; its full sequence is Probable ribosome production factor 1 (394 aa).

2 disordered regions span residues 1–98 and 116–152; these read MIKI…PVLN and MKKEKHKKKMQERRARRKAGVPANPGHTIESLREKDQ. Composition is skewed to acidic residues over residues 15–33 and 59–88; these read QDSDSDSSFDEEEPQDLEV and ASEDLKEEDDDDDEEENDDDDEEEDDDDDD. Basic residues predominate over residues 116–134; that stretch reads MKKEKHKKKMQERRARRKA. Residues 185-369 form the Brix domain; that stretch reads PKVLITFADN…LRSLQEGTFD (185 aa). Positions 347 to 364 are RNA-binding; the sequence is VKLRELGPRFTLKLRSLQ.

It is found in the nucleus. Its subcellular location is the nucleolus. Functionally, may be required for ribosome biogenesis. This is Probable ribosome production factor 1 from Drosophila melanogaster (Fruit fly).